The following is an 892-amino-acid chain: Translation initiation factor IF-2 (892 aa).

Residues 88–305 (KKRTFVKRDP…SLQQGFQKPA (218 aa)) form a disordered region. Composition is skewed to basic and acidic residues over residues 93–159 (VKRD…KDKV) and 166–216 (DMTK…EENK). The segment covering 254 to 269 (GRGRNAKAARPAKKGK) has biased composition (basic residues). Over residues 270–282 (HAESKADREEARA) the composition is skewed to basic and acidic residues. The tr-type G domain occupies 391-560 (PRAPVVTIMG…LLQAEVLELK (170 aa)). The G1 stretch occupies residues 400 to 407 (GHVDHGKT). Residue 400–407 (GHVDHGKT) participates in GTP binding. Residues 425–429 (GITQH) form a G2 region. Residues 446 to 449 (DTPG) form a G3 region. GTP is bound by residues 446–450 (DTPGH) and 500–503 (NKID). A G4 region spans residues 500-503 (NKID). The G5 stretch occupies residues 536–538 (SAK).

The protein belongs to the TRAFAC class translation factor GTPase superfamily. Classic translation factor GTPase family. IF-2 subfamily.

It is found in the cytoplasm. Functionally, one of the essential components for the initiation of protein synthesis. Protects formylmethionyl-tRNA from spontaneous hydrolysis and promotes its binding to the 30S ribosomal subunits. Also involved in the hydrolysis of GTP during the formation of the 70S ribosomal complex. This Salmonella paratyphi A (strain ATCC 9150 / SARB42) protein is Translation initiation factor IF-2.